The chain runs to 299 residues: Urease accessory protein UreD (299 aa).

Belongs to the UreD family. In terms of assembly, ureD, UreF and UreG form a complex that acts as a GTP-hydrolysis-dependent molecular chaperone, activating the urease apoprotein by helping to assemble the nickel containing metallocenter of UreC. The UreE protein probably delivers the nickel.

Its subcellular location is the cytoplasm. In terms of biological role, required for maturation of urease via the functional incorporation of the urease nickel metallocenter. The protein is Urease accessory protein UreD of Natronomonas pharaonis (strain ATCC 35678 / DSM 2160 / CIP 103997 / JCM 8858 / NBRC 14720 / NCIMB 2260 / Gabara) (Halobacterium pharaonis).